The following is a 517-amino-acid chain: ATP synthase subunit alpha (517 aa).

Residue 173-180 (GDRQTGKT) participates in ATP binding.

Belongs to the ATPase alpha/beta chains family. In terms of assembly, F-type ATPases have 2 components, CF(1) - the catalytic core - and CF(0) - the membrane proton channel. CF(1) has five subunits: alpha(3), beta(3), gamma(1), delta(1), epsilon(1). CF(0) has three main subunits: a(1), b(2) and c(9-12). The alpha and beta chains form an alternating ring which encloses part of the gamma chain. CF(1) is attached to CF(0) by a central stalk formed by the gamma and epsilon chains, while a peripheral stalk is formed by the delta and b chains.

It localises to the cell inner membrane. The catalysed reaction is ATP + H2O + 4 H(+)(in) = ADP + phosphate + 5 H(+)(out). Functionally, produces ATP from ADP in the presence of a proton gradient across the membrane. The alpha chain is a regulatory subunit. The chain is ATP synthase subunit alpha from Legionella pneumophila (strain Lens).